Reading from the N-terminus, the 752-residue chain is Conserved oligomeric Golgi complex subunit 6 (752 aa).

3 disordered regions span residues 1 to 36 (MASY…RSNA), 601 to 620 (SSTN…KQPQ), and 702 to 736 (VTRD…GLGL). Residues 9–25 (AASSHVSTRSSSPASSP) are compositionally biased toward low complexity. Residues 601–619 (SSTNGPSDTANDGQQQKQP) show a composition bias toward polar residues. Residues 702 to 721 (VTRDRAVEDDSASDSDKDKD) are compositionally biased toward basic and acidic residues.

It belongs to the COG6 family.

It localises to the golgi apparatus membrane. Its function is as follows. Acts as a component of the peripheral membrane COG complex that is involved in intra-Golgi protein trafficking. COG is located at the cis-Golgi, and regulates tethering of retrograde intra-Golgi vesicles and possibly a number of other membrane trafficking events. The polypeptide is Conserved oligomeric Golgi complex subunit 6 (cog6) (Aspergillus terreus (strain NIH 2624 / FGSC A1156)).